Consider the following 612-residue polypeptide: MFRCGGLAGAFKQKLVPLVRTVYVQRPKQRNRLPGNLFQQWRVPLELQMARQMASSGSSGGKMDNSVLVLIVGLSTIGAGAYAYKTIKEDQKRYNERVMGLGLSPEEKQRRAIASATEGGSVPQIRAPSHVPFLLIGGGTAAFAAARSIRARDPGARVLIVSEDPELPYMRPPLSKELWFSDDPNVTKTLQFRQWNGKERSIYFQPPSFYVSAQDLPNIENGGVAVLTGKKVVHLDVRGNMVKLNDGSQITFEKCLIATGGTPRSLSAIDRAGAEVKSRTTLFRKIGDFRALEKISREVKSITVIGGGFLGSELACALGRKSQASGIEVIQLFPEKGNMGKILPQYLSNWTMEKVKREGVKVMPNAIVQSVGVSGGRLLIKLKDGRKVETDHIVTAVGLEPNVELAKTGGLEIDSDFGGFRVNAELQARSNIWVAGDAACFYDIKLGRRRVEHHDHAVVSGRLAGENMTGAAKPYWHQSMFWSDLGPDVGYEAIGLVDSSLPTVGVFAKATAQDNPKSATEQSGTGIRSESETESEASEITIPPSAPAVPQVPVEGEDYGKGVIFYLRDKVVVGIVLWNVFNRMPIARKIIKDGEQHEDLNEVAKLFNIHED.

2 consecutive short sequence motifs (mitochondrial localization signal) follow at residues 1–30 and 62–88; these read MFRC…PKQR and KMDN…KTIK. The transit peptide at 1–54 directs the protein to the mitochondrion; the sequence is MFRCGGLAGAFKQKLVPLVRTVYVQRPKQRNRLPGNLFQQWRVPLELQMARQMA. A propeptide spans 55–101 (removed in mature form); it reads SSGSSGGKMDNSVLVLIVGLSTIGAGAYAYKTIKEDQKRYNERVMGL. N6-succinyllysine is present on Lys-108. Ser-115 carries the phosphoserine modification. Positions 133-482 are FAD-dependent oxidoreductase; the sequence is FLLIGGGTAA…KPYWHQSMFW (350 aa). Residues 137 to 141, 163 to 164, Arg-171, and Lys-176 each bind FAD; these read GGGTA and ED. Trp-195 contacts NAD(+). Residue Val-232 coordinates FAD. Lys-254 participates in a covalent cross-link: Glycyl lysine isopeptide (Lys-Gly) (interchain with G-Cter in ubiquitin). Ser-267 carries the post-translational modification Phosphoserine. FAD is bound at residue Arg-284. NAD(+) contacts are provided by residues 307-310, Glu-335, and Lys-341; that span reads GGFL. Ser-370 carries the phosphoserine modification. Lys-387 bears the N6-acetyllysine mark. Gly-398 provides a ligand contact to NAD(+). Position 437 (Asp-437) interacts with FAD. The Nuclear localization signal motif lies at 445 to 450; the sequence is KLGRRR. NAD(+) is bound by residues 452–453, Trp-482, and Glu-492; that span reads EH. FAD is bound by residues 453–454 and Trp-482; that span reads HH. Polar residues predominate over residues 512-528; the sequence is AQDNPKSATEQSGTGIR. The tract at residues 512–551 is disordered; that stretch reads AQDNPKSATEQSGTGIRSESETESEASEITIPPSAPAVPQ. Position 520 is a phosphothreonine (Thr-520). Phosphoserine occurs at positions 523 and 529. Asn-582 provides a ligand contact to NAD(+). An N6-acetyllysine modification is found at Lys-592.

It belongs to the FAD-dependent oxidoreductase family. In terms of assembly, monomer (oxidized form). Homodimer (reduced form). Upon reduction with NADH, undergoes dimerization and forms tight, long-lived FADH2-NAD charge transfer complexes (CTC) resistant to oxidation. Also dimerizes with isoform 3 preventing its release from mitochondria. Interacts with XIAP/BIRC4. Interacts (via N-terminus) with EIF3G (via C-terminus). Interacts with PRELID1. Interacts with CHCHD4; the interaction increases in presence of NADH. Interacts with processed form of PARP1 (Poly [ADP-ribose] polymerase 1, processed C-terminus); interaction is mediated with poly-ADP-ribose chains attached to PARP1, promoting translocation into the nucleus. FAD is required as a cofactor. In terms of processing, under normal conditions, a 54-residue N-terminal segment is first proteolytically removed during or just after translocation into the mitochondrial intermembrane space (IMS) by the mitochondrial processing peptidase (MPP) to form the inner-membrane-anchored mature form (AIFmit). During apoptosis, it is further proteolytically processed at amino-acid position 101 leading to the generation of the mature form, which is confined to the mitochondrial IMS in a soluble form (AIFsol). AIFsol is released to the cytoplasm in response to specific death signals, and translocated to the nucleus, where it induces nuclear apoptosis in a caspase-independent manner. Ubiquitination by XIAP/BIRC4 does not lead to proteasomal degradation. Ubiquitination at Lys-254 by XIAP/BIRC4 blocks its ability to bind DNA and induce chromatin degradation, thereby inhibiting its ability to induce cell death. As to expression, expressed in cortical neurons (at protein level). Expressed in liver (at protein level).

It localises to the mitochondrion intermembrane space. Its subcellular location is the mitochondrion inner membrane. The protein resides in the cytoplasm. The protein localises to the nucleus. It is found in the perinuclear region. It localises to the mitochondrion. Its subcellular location is the cytosol. The enzyme catalyses A + NADH + H(+) = AH2 + NAD(+). In terms of biological role, functions both as NADH oxidoreductase and as regulator of apoptosis. In response to apoptotic stimuli, it is released from the mitochondrion intermembrane space into the cytosol and to the nucleus, where it functions as a proapoptotic factor in a caspase-independent pathway. Release into the cytoplasm is mediated upon binding to poly-ADP-ribose chains. The soluble form (AIFsol) found in the nucleus induces 'parthanatos' i.e. caspase-independent fragmentation of chromosomal DNA. Binds to DNA in a sequence-independent manner. Interacts with EIF3G, and thereby inhibits the EIF3 machinery and protein synthesis, and activates caspase-7 to amplify apoptosis. Plays a critical role in caspase-independent, pyknotic cell death in hydrogen peroxide-exposed cells. In contrast, participates in normal mitochondrial metabolism. Plays an important role in the regulation of respiratory chain biogenesis by interacting with CHCHD4 and controlling CHCHD4 mitochondrial import. This Mus musculus (Mouse) protein is Apoptosis-inducing factor 1, mitochondrial.